The following is a 382-amino-acid chain: Mitogen-activated protein kinase 9 (382 aa).

A Protein kinase domain is found at 26–321 (YQQLKPIGSG…VDEALRHPYI (296 aa)). Residues 33–38 (GSGAQG) and Lys55 each bind ATP. The Proton acceptor role is filled by Asp151. Thr183 is modified (phosphothreonine). The short motif at 183–185 (TPY) is the TXY element. Tyr185 carries the phosphotyrosine modification.

The protein belongs to the protein kinase superfamily. CMGC Ser/Thr protein kinase family. MAP kinase subfamily. It depends on Mg(2+) as a cofactor. In terms of processing, dually phosphorylated on Thr-183 and Tyr-185, which activates the enzyme. In terms of tissue distribution, expressed in the neuroepithelium of developing brain at stages 16 to 26.

It catalyses the reaction L-seryl-[protein] + ATP = O-phospho-L-seryl-[protein] + ADP + H(+). The catalysed reaction is L-threonyl-[protein] + ATP = O-phospho-L-threonyl-[protein] + ADP + H(+). With respect to regulation, activated by threonine and tyrosine phosphorylation. Its function is as follows. Responds to activation by environmental stress and pro-inflammatory cytokines by phosphorylating a number of transcription factors, primarily components of AP-1 such as JUN and ATF2 and thus regulates AP-1 transcriptional activity. May play a role in the development of the central nervous system during embryogenesis. May play a role in the regulation of the circadian clock. The chain is Mitogen-activated protein kinase 9 (MAPK9) from Gallus gallus (Chicken).